We begin with the raw amino-acid sequence, 265 residues long: Small ribosomal subunit protein uS2 (265 aa).

Positions 226-265 are disordered; the sequence is AAAPNSASVREEEFSADAADEGKGRRAPAKKGDKKADAAE. Positions 245–265 are enriched in basic and acidic residues; sequence DEGKGRRAPAKKGDKKADAAE.

Belongs to the universal ribosomal protein uS2 family.

This is Small ribosomal subunit protein uS2 from Xanthomonas axonopodis pv. citri (strain 306).